Consider the following 885-residue polypeptide: MSNTESLNIGKKRGSLTIYIGYSPGVGKTFEMLSNAIELFQSNVDIKIGYIEPHQRDETNALAEQLPKITTNFTKHGSHHFQYLDVDRIIEESPTIVLIDELAHTNISRDRHEKRYMDIEEILNHGIDVHTTLNIQHIESLSSQIELMTGVHVKERVPDYFIMSADVLEVVDISPEQLIKRLKAGKVYKKDRLDVAFSNFFTYAHLSELRTLTLRTVADLMSDKEKVRHNHKTSLKPHIAVAISGSIYNEAVIKEAFHIAQKEHAKFTAIYIDVFEKNRQYKDSQKQVHQHLMLAKSLGAKVKVVYSQTVALGLDEWCKNQDVTKLIIGQHIRNKWRDFFNTPLIDHLMSFEHSYKIEIVPIKQIPVELKMNKSPYRPKGKRFAIDMLKMILIQIICVMMGLWIYQLDKHESSTIILMIFLIGIILLSIWTRSFIIGFLAAIINVFVFNYFFTEPRYTFEVYRFDYPITFIVSILTSILTSALLKQIKFQYSITKKQLYRTDLLFQFNDSIKQTYTVENLLINAGYQINQLLQQSITIYVINQSKVIKTIPLQNHIDNTTQQHEQALSWVIKNERQAGATTDTFPGINKWLIPIGTSPIKGILAIDYQSSQVINPYDASILESMLNELSLAVENVTLLKQTRESMLQAERQLTHSNFLRSISHDIRTPLTTIMGNLDILVSHSKDMSIIEKEQLLVHSFQESQYLYLLVTNILSLTKLQSSNVQIKLQPYLVSELVEEIDMILERRHLKKRITVSSSVNLQFIHIDSKLILQALFNLIENAVKHTSTDTKINLSIRYASYEQIEFAVIDEGPGISLEEQQKIFEPFYTGSNKYFKDNQKESMGLGLYLVQTILHKHQSNLQYKPNQPHGSIFYFNIYTDFNEGDV.

4 helical membrane-spanning segments follow: residues 384–404, 415–435, 436–456, and 464–484; these read AIDMLKMILIQIICVMMGLWI, IILMIFLIGIILLSIWTRSFI, IGFLAAIINVFVFNYFFTEPR, and FDYPITFIVSILTSILTSALL. In terms of domain architecture, Histidine kinase spans 660–880; the sequence is SISHDIRTPL…IFYFNIYTDF (221 aa). His663 carries the post-translational modification Phosphohistidine; by autocatalysis.

The protein resides in the membrane. It catalyses the reaction ATP + protein L-histidine = ADP + protein N-phospho-L-histidine.. Its activity is regulated as follows. Cyclic di-AMP is a negative regulator of the Kdp system. Member of the two-component regulatory system KdpD/KdpE that regulates the transcription of a series of virulence factors through sensing external K(+) concentrations. Also regulates capsular polysaccharide production. May function as a membrane-associated protein kinase that phosphorylates KdpE in response to environmental signals. In turn, KpdE functions as a transcriptional regulator by direct binding to promoter regions of target genes including spa, hla, aur and geh. The chain is Sensor histidine kinase KdpD from Staphylococcus aureus (strain NCTC 8325 / PS 47).